Reading from the N-terminus, the 180-residue chain is Large ribosomal subunit protein uL6 (180 aa).

The protein belongs to the universal ribosomal protein uL6 family. In terms of assembly, part of the 50S ribosomal subunit.

This protein binds to the 23S rRNA, and is important in its secondary structure. It is located near the subunit interface in the base of the L7/L12 stalk, and near the tRNA binding site of the peptidyltransferase center. The sequence is that of Large ribosomal subunit protein uL6 from Anaeromyxobacter dehalogenans (strain 2CP-C).